Consider the following 273-residue polypeptide: Dermonecrotic toxin LsaSicTox-alphaIB1bi (273 aa).

Residue histidine 5 is part of the active site. Glutamate 25 and aspartate 27 together coordinate Mg(2+). Histidine 41 (nucleophile) is an active-site residue. 2 disulfide bridges follow: cysteine 45–cysteine 51 and cysteine 47–cysteine 190. Position 85 (aspartate 85) interacts with Mg(2+).

This sequence belongs to the arthropod phospholipase D family. Class II subfamily. Mg(2+) serves as cofactor. Expressed by the venom gland.

It is found in the secreted. It catalyses the reaction an N-(acyl)-sphingosylphosphocholine = an N-(acyl)-sphingosyl-1,3-cyclic phosphate + choline. The enzyme catalyses an N-(acyl)-sphingosylphosphoethanolamine = an N-(acyl)-sphingosyl-1,3-cyclic phosphate + ethanolamine. It carries out the reaction a 1-acyl-sn-glycero-3-phosphocholine = a 1-acyl-sn-glycero-2,3-cyclic phosphate + choline. The catalysed reaction is a 1-acyl-sn-glycero-3-phosphoethanolamine = a 1-acyl-sn-glycero-2,3-cyclic phosphate + ethanolamine. Its function is as follows. Dermonecrotic toxins cleave the phosphodiester linkage between the phosphate and headgroup of certain phospholipids (sphingolipid and lysolipid substrates), forming an alcohol (often choline) and a cyclic phosphate. This toxin acts on sphingomyelin (SM). It may also act on ceramide phosphoethanolamine (CPE), lysophosphatidylcholine (LPC) and lysophosphatidylethanolamine (LPE), but not on lysophosphatidylserine (LPS), and lysophosphatidylglycerol (LPG). It acts by transphosphatidylation, releasing exclusively cyclic phosphate products as second products. Induces dermonecrosis, hemolysis, increased vascular permeability, edema, inflammatory response, and platelet aggregation. The sequence is that of Dermonecrotic toxin LsaSicTox-alphaIB1bi from Loxosceles sabina (Tucson recluse spider).